Consider the following 419-residue polypeptide: MQLLNFGLLLLPFVAGDLAPQPEPLLAGPSDVVPGQYIVTLKEGLTSAQIRDHKKWVSSVHRANLDSFAAGASGVETEGIMKHFHIHDLNMYSGGFDEKTVEDLSRNPYVKSVHPDQHVYLAKTVTQRQARWGLGYMSSKGKPVPLHSTLVDYSYDDKAGEGVWAYVLDTGINVNHVEFEGRGILGHNAIPNKPHTDEFGHGTYVAGIIAGKTYGVAKKANVVSAKAFDTGSSTYNYILETYDWIVRNITDSNRKNKAVINLSISGAKYQPFDDAVEKAFKAGITTVVAAGNDGKDAKNNTPASSPNAITVGAVRWENTRPSFSNYGKLVDIWAPGELIKSCWKGGNNATSTQSGTSAASPHVAGLVAYLMSIENLPSPSAVTARVLNLTIPNLVKDAKDSPNRVAYNGIQERKFKLPK.

The signal sequence occupies residues 1-16 (MQLLNFGLLLLPFVAG). A propeptide spanning residues 17 to 122 (DLAPQPEPLL…VHPDQHVYLA (106 aa)) is cleaved from the precursor. Residues 36 to 122 (QYIVTLKEGL…VHPDQHVYLA (87 aa)) form the Inhibitor I9 domain. Positions 131 to 419 (RWGLGYMSSK…IQERKFKLPK (289 aa)) constitute a Peptidase S8 domain. Catalysis depends on charge relay system residues Asp-169 and His-201. Asn-248, Asn-261, and Asn-348 each carry an N-linked (GlcNAc...) asparagine glycan. Ser-357 (charge relay system) is an active-site residue. An N-linked (GlcNAc...) asparagine glycan is attached at Asn-388.

This sequence belongs to the peptidase S8 family.

Its subcellular location is the secreted. In terms of biological role, secreted subtilisin-like serine protease with keratinolytic activity that contributes to pathogenicity. This is Subtilisin-like protease 2 (SUB2) from Arthroderma benhamiae (Trichophyton mentagrophytes).